Reading from the N-terminus, the 536-residue chain is ATP synthase subunit alpha, mitochondrial (536 aa).

The N-terminal 27 residues, 1-27, are a transit peptide targeting the mitochondrion; it reads MLRQAGTRLLKVPVCGLRPSITLKRGY. Position 197 to 204 (197 to 204) interacts with ATP; sequence GDRQTGKT.

This sequence belongs to the ATPase alpha/beta chains family. As to quaternary structure, F-type ATPases have 2 components, CF(1) - the catalytic core - and CF(0) - the membrane proton channel. CF(1) has five subunits: alpha(3), beta(3), gamma(1), delta(1), epsilon(1). CF(0) has three main subunits: a, b and c.

The protein resides in the mitochondrion. Its subcellular location is the mitochondrion inner membrane. Its function is as follows. Mitochondrial membrane ATP synthase (F(1)F(0) ATP synthase or Complex V) produces ATP from ADP in the presence of a proton gradient across the membrane which is generated by electron transport complexes of the respiratory chain. F-type ATPases consist of two structural domains, F(1) - containing the extramembraneous catalytic core, and F(0) - containing the membrane proton channel, linked together by a central stalk and a peripheral stalk. During catalysis, ATP synthesis in the catalytic domain of F(1) is coupled via a rotary mechanism of the central stalk subunits to proton translocation. Subunits alpha and beta form the catalytic core in F(1). Rotation of the central stalk against the surrounding alpha(3)beta(3) subunits leads to hydrolysis of ATP in three separate catalytic sites on the beta subunits. Subunit alpha does not bear the catalytic high-affinity ATP-binding sites. The polypeptide is ATP synthase subunit alpha, mitochondrial (atp1) (Schizosaccharomyces pombe (strain 972 / ATCC 24843) (Fission yeast)).